The primary structure comprises 913 residues: Epithelial discoidin domain-containing receptor 1 (913 aa).

A signal peptide spans 1–18 (MGPEALSSLLLLLLVASG). The Extracellular segment spans residues 21–417 (DMKGHFDPAK…VAKAEGSPTA (397 aa)). An F5/8 type C domain is found at 31-185 (CRYALGMQDR…VCLRVELYGC (155 aa)). Cystine bridges form between C31/C185 and C74/C177. The tract at residues 192–367 (LSYTAPVGQT…LFSEISFISD (176 aa)) is DS-like domain. Ca(2+) contacts are provided by N211, Q230, D233, V235, Y253, and Y255. N211 carries an N-linked (GlcNAc...) asparagine glycan. N-linked (GlcNAc...) asparagine glycosylation is present at N260. Residues C303 and C348 are joined by a disulfide bond. The Ca(2+) site is built by S360 and E361. Residues N370 and N394 are each glycosylated (N-linked (GlcNAc...) asparagine). Residues 418–438 (ILIGCLVAIILLLLLIIALML) traverse the membrane as a helical segment. Residues 439–913 (WRLHWRRLLS…FLAEDALNTV (475 aa)) are Cytoplasmic-facing. Residues 470–499 (ILINNRPGPREPPPYQEPRPRGNPPHSAPC) form a disordered region. Residues 479–496 (REPPPYQEPRPRGNPPHS) show a composition bias toward pro residues. The PPxY motif signature appears at 481 to 484 (PPPY). Phosphotyrosine; by autocatalysis occurs at positions 484, 513, and 520. Positions 610–905 (LRFKEKLGEG…PPFSQLHRFL (296 aa)) constitute a Protein kinase domain. 616 to 624 (LGEGQFGEV) contributes to the ATP binding site. S631 is modified (phosphoserine). K655 provides a ligand contact to ATP. Y740 is subject to Phosphotyrosine; by autocatalysis. D766 serves as the catalytic Proton acceptor. Phosphotyrosine; by autocatalysis occurs at positions 792, 796, and 797.

Belongs to the protein kinase superfamily. Tyr protein kinase family. Insulin receptor subfamily. In terms of assembly, homodimer. Interacts (via PPxY motif) with WWC1 (via WW domains) in a collagen-regulated manner. Forms a tripartite complex with WWC1 and PRKCZ, but predominantly in the absence of collagen. Interacts (tyrosine phosphorylated) with SHC1. Interacts with SRC. Interacts with MYH9. Interacts with CDH1. Interacts with PTPN11. Interacts with NCK2. Autophosphorylated in response to fibrillar collagen binding. Post-translationally, glycosylation of Asn-211, but apparently not of Asn-260 or Asn-394, prevents autophosphorylation from occurring in the absence of collagen. In terms of tissue distribution, detected in T-47D, MDA-MB-175 and HBL-100 breast carcinoma cells, A-431 epidermoid carcinoma cells, SW48 and SNU-C2B colon carcinoma cells and Hs 294T melanoma cells (at protein level). Expressed at low levels in most adult tissues and is highest in the brain, lung, placenta and kidney. Lower levels of expression are detected in melanocytes, heart, liver, skeletal muscle and pancreas. Abundant in breast carcinoma cell lines. In the colonic mucosa, expressed in epithelia but not in the connective tissue of the lamina propria. In the thyroid gland, expressed in the epithelium of the thyroid follicles. In pancreas, expressed in the islets of Langerhans cells, but not in the surrounding epithelial cells of the exocrine pancreas. In kidney, expressed in the epithelia of the distal tubules. Not expressed in connective tissue, endothelial cells, adipose tissue, muscle cells or cells of hematopoietic origin.

Its subcellular location is the cell membrane. The protein localises to the secreted. The catalysed reaction is L-tyrosyl-[protein] + ATP = O-phospho-L-tyrosyl-[protein] + ADP + H(+). With respect to regulation, inhibited by the multi-targeted cancer drugs imatinib and ponatinib. In terms of biological role, tyrosine kinase that functions as a cell surface receptor for fibrillar collagen and regulates cell attachment to the extracellular matrix, remodeling of the extracellular matrix, cell migration, differentiation, survival and cell proliferation. Collagen binding triggers a signaling pathway that involves SRC and leads to the activation of MAP kinases. Regulates remodeling of the extracellular matrix by up-regulation of the matrix metalloproteinases MMP2, MMP7 and MMP9, and thereby facilitates cell migration and wound healing. Required for normal blastocyst implantation during pregnancy, for normal mammary gland differentiation and normal lactation. Required for normal ear morphology and normal hearing. Promotes smooth muscle cell migration, and thereby contributes to arterial wound healing. Also plays a role in tumor cell invasion. Phosphorylates PTPN11. The sequence is that of Epithelial discoidin domain-containing receptor 1 (DDR1) from Homo sapiens (Human).